We begin with the raw amino-acid sequence, 406 residues long: Heparan sulfate glucosamine 3-O-sulfotransferase 3A1 (406 aa).

The Cytoplasmic segment spans residues 1-24 (MAPPGPASALSTSAEPLSRSIFRK). The helical; Signal-anchor for type II membrane protein transmembrane segment at 25–43 (FLLMLCSLLTSLYVFYCLA) threads the bilayer. The Lumenal portion of the chain corresponds to 44–406 (ERCQTLSGPV…MTGHDFGWDG (363 aa)). Positions 92-102 (QLPQWRRRRPP) are enriched in basic residues. A disordered region spans residues 92-134 (QLPQWRRRRPPAPRDDGEEAAWEEESPGLSGGPGGSGAGSTVA). A compositionally biased stretch (acidic residues) spans 107–117 (DGEEAAWEEES). Over residues 120–129 (LSGGPGGSGA) the composition is skewed to gly residues. 162-166 (KGGTR) is a 3'-phosphoadenylyl sulfate binding site. Substrate is bound by residues arginine 166, 184 to 190 (EPHFFDR), and 215 to 218 (KTPS). 3'-phosphoadenylyl sulfate contacts are provided by arginine 243 and serine 251. 255–259 (QTLSK) lines the substrate pocket. Asparagine 273 carries N-linked (GlcNAc...) asparagine glycosylation. A substrate-binding site is contributed by 283–284 (WS). The N-linked (GlcNAc...) asparagine glycan is linked to asparagine 344. A disulfide bridge links cysteine 351 with cysteine 363. 367–370 (TKGR) serves as a coordination point for substrate. Residue 368-372 (KGRTH) coordinates 3'-phosphoadenylyl sulfate.

This sequence belongs to the sulfotransferase 1 family. Ubiquitous. Most abundant in heart and placenta, followed by liver and kidney.

Its subcellular location is the golgi apparatus membrane. It carries out the reaction alpha-D-glucosaminyl-[heparan sulfate](n) + 3'-phosphoadenylyl sulfate = 3-sulfo-alpha-D-glucosaminyl-[heparan sulfate](n) + adenosine 3',5'-bisphosphate + H(+). In terms of biological role, sulfotransferase that utilizes 3'-phospho-5'-adenylyl sulfate (PAPS) to catalyze the transfer of a sulfo group to an N-unsubstituted glucosamine linked to a 2-O-sulfo iduronic acid unit on heparan sulfate. Catalyzes the O-sulfation of glucosamine in IdoUA2S-GlcNS and also in IdoUA2S-GlcNH2. The substrate-specific O-sulfation generates an enzyme-modified heparan sulfate which acts as a binding receptor to Herpes simplex virus-1 (HSV-1) and permits its entry. Unlike HS3ST1/3-OST-1, does not convert non-anticoagulant heparan sulfate to anticoagulant heparan sulfate. This is Heparan sulfate glucosamine 3-O-sulfotransferase 3A1 (HS3ST3A1) from Homo sapiens (Human).